The chain runs to 359 residues: MAP kinase-activated protein kinase 2 (359 aa).

The Protein kinase domain occupies 20 to 281; sequence VTSNTVLGYG…IQDVISNKWI (262 aa). ATP-binding positions include 26 to 34 and Lys-49; that span reads LGYGINGKV. Catalysis depends on Asp-142, which acts as the Proton acceptor.

The protein belongs to the protein kinase superfamily. CAMK Ser/Thr protein kinase family. Phosphorylated and activated by MAP kinase.

It catalyses the reaction L-seryl-[protein] + ATP = O-phospho-L-seryl-[protein] + ADP + H(+). The enzyme catalyses L-threonyl-[protein] + ATP = O-phospho-L-threonyl-[protein] + ADP + H(+). Its function is as follows. Its physiological substrate seems to be the small heat shock protein (HSP27/HSP25). In Drosophila melanogaster (Fruit fly), this protein is MAP kinase-activated protein kinase 2 (MAPk-Ak2).